The primary structure comprises 290 residues: 4-hydroxybenzoate octaprenyltransferase (290 aa).

Transmembrane regions (helical) follow at residues 23-43, 46-66, 99-119, 141-161, 163-183, 212-232, 233-253, and 268-288; these read IGAL…TPGM, LWIL…GCVV, LFVV…AMTI, LPQV…FAAV, ESLP…AVAY, TLII…IGWL, NGLG…FVYQ, and AFMN…MSYW.

It belongs to the UbiA prenyltransferase family. The cofactor is Mg(2+).

It localises to the cell inner membrane. It carries out the reaction all-trans-octaprenyl diphosphate + 4-hydroxybenzoate = 4-hydroxy-3-(all-trans-octaprenyl)benzoate + diphosphate. Its pathway is cofactor biosynthesis; ubiquinone biosynthesis. Catalyzes the prenylation of para-hydroxybenzoate (PHB) with an all-trans polyprenyl group. Mediates the second step in the final reaction sequence of ubiquinone-8 (UQ-8) biosynthesis, which is the condensation of the polyisoprenoid side chain with PHB, generating the first membrane-bound Q intermediate 3-octaprenyl-4-hydroxybenzoate. This chain is 4-hydroxybenzoate octaprenyltransferase, found in Salmonella typhi.